The primary structure comprises 331 residues: Serine/threonine-protein phosphatase PP1 isozyme 7 (331 aa).

Methionine 1 carries the N-acetylmethionine modification. Aspartate 60, histidine 62, aspartate 88, and asparagine 120 together coordinate Mn(2+). Catalysis depends on histidine 121, which acts as the Proton donor. 2 residues coordinate Mn(2+): histidine 169 and histidine 244.

This sequence belongs to the PPP phosphatase family. PP-1 subfamily. Mn(2+) serves as cofactor. In terms of tissue distribution, expressed in roots, rosettes and flowers.

It localises to the nucleus. It is found in the cytoplasm. The enzyme catalyses O-phospho-L-seryl-[protein] + H2O = L-seryl-[protein] + phosphate. The catalysed reaction is O-phospho-L-threonyl-[protein] + H2O = L-threonyl-[protein] + phosphate. With respect to regulation, phosphatase activity is strongly reduced by the protein phosphatase inhibitor 2 (I-2). Serine/threonine-protein phosphatase that possesses phosphatase activity toward para-nitrophenyl phosphate (pNPP) in vitro. The protein is Serine/threonine-protein phosphatase PP1 isozyme 7 of Arabidopsis thaliana (Mouse-ear cress).